The sequence spans 183 residues: Adenine phosphoribosyltransferase (183 aa).

Belongs to the purine/pyrimidine phosphoribosyltransferase family. As to quaternary structure, homodimer.

The protein localises to the cytoplasm. The enzyme catalyses AMP + diphosphate = 5-phospho-alpha-D-ribose 1-diphosphate + adenine. The protein operates within purine metabolism; AMP biosynthesis via salvage pathway; AMP from adenine: step 1/1. Functionally, catalyzes a salvage reaction resulting in the formation of AMP, that is energically less costly than de novo synthesis. This Shewanella oneidensis (strain ATCC 700550 / JCM 31522 / CIP 106686 / LMG 19005 / NCIMB 14063 / MR-1) protein is Adenine phosphoribosyltransferase.